Consider the following 79-residue polypeptide: Submaxillary gland androgen-regulated protein 3B (79 aa).

An N-terminal signal peptide occupies residues 1-22 (MKSLTWILGLWALAACFTPGES). The interval 19-79 (PGESQRGPRG…GIFPPPPPQP (61 aa)) is disordered. A Pyrrolidone carboxylic acid modification is found at Gln23. Pro residues predominate over residues 28–79 (GPYPPGPLAPPQPFGPGFVPPPPPPPYGPGRIPPPPPAPYGPGIFPPPPPQP).

Belongs to the PROL1/PROL3 family. Post-translationally, P-A and D1A are probably degradation products of P-B. As to expression, secreted into saliva by submaxillary gland. Not expressed in heart, brain, lung, liver, skeletal muscle, Kidney, pancreas or placenta.

Its subcellular location is the secreted. This chain is Submaxillary gland androgen-regulated protein 3B (SMR3B), found in Homo sapiens (Human).